The sequence spans 419 residues: N-acylneuraminate cytidylyltransferase (419 aa).

This sequence belongs to the CMP-NeuNAc synthase family. Monomer. May form aggregates. It depends on Mg(2+) as a cofactor. Mn(2+) serves as cofactor.

The protein resides in the cytoplasm. The catalysed reaction is an N-acylneuraminate + CTP = a CMP-N-acyl-beta-neuraminate + diphosphate. With respect to regulation, inhibited by the CTP analogs 5-mercuri-CTP and CTP-2',3'-dialdehyde. Functionally, catalyzes the formation of CMP-N-acetylneuraminic acid (CMP-NeuNAc), which is essential for the formation of the capsule. This Escherichia coli O18:K1:H7 (strain RS218 / NMEC) protein is N-acylneuraminate cytidylyltransferase (neuA).